We begin with the raw amino-acid sequence, 450 residues long: Chromosomal replication initiator protein DnaA (450 aa).

The tract at residues 1-79 (MENIHDLWNR…TGEELLIKFI (79 aa)) is domain I, interacts with DnaA modulators. The interval 79-111 (ITPPNQSEDDFEFQRSSKKHRKPYEESTDFPQS) is domain II. The tract at residues 112–328 (MLNPKYTFDT…GALIRVVAYS (217 aa)) is domain III, AAA+ region. ATP-binding residues include G156, G158, K159, and T160. Residues 329–450 (SLINKEITAD…KEIEEKLKQL (122 aa)) are domain IV, binds dsDNA.

Belongs to the DnaA family. Oligomerizes as a right-handed, spiral filament on DNA at oriC.

The protein resides in the cytoplasm. In terms of biological role, plays an essential role in the initiation and regulation of chromosomal replication. ATP-DnaA binds to the origin of replication (oriC) to initiate formation of the DNA replication initiation complex once per cell cycle. Binds the DnaA box (a 9 base pair repeat at the origin) and separates the double-stranded (ds)DNA. Forms a right-handed helical filament on oriC DNA; dsDNA binds to the exterior of the filament while single-stranded (ss)DNA is stabiized in the filament's interior. The ATP-DnaA-oriC complex binds and stabilizes one strand of the AT-rich DNA unwinding element (DUE), permitting loading of DNA polymerase. After initiation quickly degrades to an ADP-DnaA complex that is not apt for DNA replication. Binds acidic phospholipids. The sequence is that of Chromosomal replication initiator protein DnaA from Geobacillus sp. (strain WCH70).